A 94-amino-acid polypeptide reads, in one-letter code: MITIKAEARQGQGKGASRRLRSAGKFPAIVYGGSEAPVSIELDHDSVKNQEVKEGFYGETLILSIDGKEVQVKVQAVQRHVYKPKLTHIDFVRV.

It belongs to the bacterial ribosomal protein bL25 family. In terms of assembly, part of the 50S ribosomal subunit; part of the 5S rRNA/L5/L18/L25 subcomplex. Contacts the 5S rRNA. Binds to the 5S rRNA independently of L5 and L18.

In terms of biological role, this is one of the proteins that binds to the 5S RNA in the ribosome where it forms part of the central protuberance. The protein is Large ribosomal subunit protein bL25 of Pectobacterium atrosepticum (strain SCRI 1043 / ATCC BAA-672) (Erwinia carotovora subsp. atroseptica).